The sequence spans 310 residues: Putative methyltransferase mtx subunit H (310 aa).

The protein belongs to the MtrH family. In terms of assembly, may be part of a complex composed of 3 subunits; MtxA, MtxH and MtxX.

The chain is Putative methyltransferase mtx subunit H (mtxH) from Methanosarcina barkeri (strain Fusaro / DSM 804).